We begin with the raw amino-acid sequence, 100 residues long: Integration host factor subunit alpha 2 (100 aa).

Belongs to the bacterial histone-like protein family. In terms of assembly, heterodimer of an alpha and a beta chain.

In terms of biological role, this protein is one of the two subunits of integration host factor, a specific DNA-binding protein that functions in genetic recombination as well as in transcriptional and translational control. The protein is Integration host factor subunit alpha 2 of Dechloromonas aromatica (strain RCB).